The chain runs to 92 residues: Large ribosomal subunit protein bL28 (92 aa).

The disordered stretch occupies residues 1–34; it reads MGRECEITGKKTMFGNNVPRKGLSRKKGGGGQHI.

This sequence belongs to the bacterial ribosomal protein bL28 family.

The protein is Large ribosomal subunit protein bL28 of Borrelia turicatae (strain 91E135).